We begin with the raw amino-acid sequence, 87 residues long: Beta-defensin 109 (87 aa).

An N-terminal signal peptide occupies residues 1–22 (MRLHLLLLILLLFSILLSPVRG). Intrachain disulfides connect Cys-31–Cys-59, Cys-38–Cys-53, and Cys-43–Cys-60.

It belongs to the beta-defensin family.

The protein resides in the secreted. Functionally, has antibacterial activity. This chain is Beta-defensin 109 (DEFB109), found in Pan troglodytes (Chimpanzee).